Here is a 69-residue protein sequence, read N- to C-terminus: Disintegrin VLO5B (69 aa).

The Disintegrin domain occupies 1–66 (MNSANPCCDP…DCPRNPWKSE (66 aa)). Cystine bridges form between Cys-7–Cys-30, Cys-21–Cys-27, Cys-26–Cys-51, and Cys-39–Cys-58. A Cell attachment site; atypical (MLD) motif is present at residues 43–45 (MLD).

Belongs to the disintegrin family. Dimeric disintegrin subfamily. As to quaternary structure, heterodimer with VLO5A; disulfide-linked. Expressed by the venom gland.

Its subcellular location is the secreted. Its function is as follows. Poor inhibitor of platelet aggregation. The disintegrin inhibits the adhesion of the alpha-4/beta-1 (ITGA4/ITGB1) integrin to VCAM-1. Inhibition on alpha-2b/beta-3 (ITGA2B/ITGB3) is low. This chain is Disintegrin VLO5B, found in Macrovipera lebetina obtusa (Levant blunt-nosed viper).